We begin with the raw amino-acid sequence, 235 residues long: Hydroxyacylglutathione hydrolase (235 aa).

Zn(2+)-binding residues include His53, His55, Asp57, His58, His109, Asp127, and His165.

This sequence belongs to the metallo-beta-lactamase superfamily. Glyoxalase II family. As to quaternary structure, monomer. The cofactor is Zn(2+).

The catalysed reaction is an S-(2-hydroxyacyl)glutathione + H2O = a 2-hydroxy carboxylate + glutathione + H(+). Its pathway is secondary metabolite metabolism; methylglyoxal degradation; (R)-lactate from methylglyoxal: step 2/2. Functionally, thiolesterase that catalyzes the hydrolysis of S-D-lactoyl-glutathione to form glutathione and D-lactic acid. The sequence is that of Hydroxyacylglutathione hydrolase from Haemophilus ducreyi (strain 35000HP / ATCC 700724).